A 1021-amino-acid polypeptide reads, in one-letter code: Contactin-1 (1021 aa).

Residues 1–20 (MKTPLLVSHLLLISLTSCLG) form the signal peptide. Ig-like C2-type domains lie at 41–131 (PIFE…ATLS), 137–223 (PFPP…KSVF), 241–326 (PADI…ARIY), 331–407 (PEWV…AELK), 413–500 (PTFE…GTLV), and 504–603 (PTRI…LVVR). 2 disulfide bridges follow: Cys65/Cys114 and Cys158/Cys211. Residues Asn208 and Asn258 are each glycosylated (N-linked (GlcNAc...) asparagine). A disulfide bridge links Cys263 with Cys310. Asn338 is a glycosylation site (N-linked (GlcNAc...) asparagine). 2 disulfides stabilise this stretch: Cys352/Cys391 and Cys436/Cys484. Residues Asn457, Asn473, Asn494, and Asn521 are each glycosylated (N-linked (GlcNAc...) asparagine). A disulfide bond links Cys526 and Cys585. Residue Asn593 is glycosylated (N-linked (GlcNAc...) asparagine). Fibronectin type-III domains follow at residues 608–706 (PPGG…TDGA), 711–808 (APSD…SAQD), 813–908 (APTE…APPS), and 909–1002 (QPPR…TLSS). Residues 695-719 (SIPSNRIKTDGAAPNVAPSDVGGGG) are disordered. Residue Asn935 is glycosylated (N-linked (GlcNAc...) asparagine). Residue Ser1001 is the site of GPI-anchor amidated serine attachment. Positions 1002 to 1021 (SGLLSLLLPSLGFLVFYSEF) are cleaved as a propeptide — removed in mature form.

The protein belongs to the immunoglobulin superfamily. Contactin family. As to quaternary structure, monomer. Interacts with NOTCH1. Interacts with CNTNAP1 in cis form and TNR. Binds to the carbonic-anhydrase like domain of PTPRZ1. Detected in a complex with NRCAM and PTPRB. Interacts with TASOR. Expressed by neurons, oligodendrocytes and their progenitors (at protein level). Myelination regulates the expression being down-regulated when neurons are in contact with Schwann cells.

The protein resides in the cell membrane. Contactins mediate cell surface interactions during nervous system development. Involved in the formation of paranodal axo-glial junctions in myelinated peripheral nerves and in the signaling between axons and myelinating glial cells via its association with CNTNAP1. Participates in oligodendrocytes generation by acting as a ligand of NOTCH1. Its association with NOTCH1 promotes NOTCH1 activation through the released notch intracellular domain (NICD) and subsequent translocation to the nucleus. Interaction with TNR induces a repulsion of neurons and an inhibition of neurite outgrowth. The protein is Contactin-1 (Cntn1) of Rattus norvegicus (Rat).